A 415-amino-acid polypeptide reads, in one-letter code: Gamma-glutamyl phosphate reductase (415 aa).

This sequence belongs to the gamma-glutamyl phosphate reductase family.

It localises to the cytoplasm. It catalyses the reaction L-glutamate 5-semialdehyde + phosphate + NADP(+) = L-glutamyl 5-phosphate + NADPH + H(+). It participates in amino-acid biosynthesis; L-proline biosynthesis; L-glutamate 5-semialdehyde from L-glutamate: step 2/2. Catalyzes the NADPH-dependent reduction of L-glutamate 5-phosphate into L-glutamate 5-semialdehyde and phosphate. The product spontaneously undergoes cyclization to form 1-pyrroline-5-carboxylate. The protein is Gamma-glutamyl phosphate reductase of Clostridium perfringens (strain 13 / Type A).